Reading from the N-terminus, the 197-residue chain is uncharacterized protein (197 aa).

This is an uncharacterized protein from Caenorhabditis elegans.